We begin with the raw amino-acid sequence, 360 residues long: 3-isopropylmalate dehydrogenase (360 aa).

76-89 (GPKWDTIERDIRPE) lines the NAD(+) pocket. The substrate site is built by Arg96, Arg106, Arg134, and Asp224. Asp224, Asp248, and Asp252 together coordinate Mg(2+). 282–294 (GSAPDIAGQGIAN) is a binding site for NAD(+).

Belongs to the isocitrate and isopropylmalate dehydrogenases family. LeuB type 1 subfamily. As to quaternary structure, homodimer. Mg(2+) serves as cofactor. Mn(2+) is required as a cofactor.

It localises to the cytoplasm. The enzyme catalyses (2R,3S)-3-isopropylmalate + NAD(+) = 4-methyl-2-oxopentanoate + CO2 + NADH. Its pathway is amino-acid biosynthesis; L-leucine biosynthesis; L-leucine from 3-methyl-2-oxobutanoate: step 3/4. Functionally, catalyzes the oxidation of 3-carboxy-2-hydroxy-4-methylpentanoate (3-isopropylmalate) to 3-carboxy-4-methyl-2-oxopentanoate. The product decarboxylates to 4-methyl-2 oxopentanoate. This chain is 3-isopropylmalate dehydrogenase, found in Pseudomonas syringae pv. tomato (strain ATCC BAA-871 / DC3000).